Consider the following 1053-residue polypeptide: MGPGPCRVPRAPGWLLRALALMVAACGRVAFAFNLDTRFLVVKEAVNPGSLFGYSVALHRQTERQQRYLLLAGAPRDLAVGDDYTNRTGAVYLCPLTAHKDDCERMDISEKSDPDHHIIEDMWLGVTVASQGPAGRVLVCAHRYTKVLWSGLEDQRRMVGKCYVRGNDLQLDPGDDWQTYHNEMCNSNTDYLQTGMCQLGTSGGFTQNTVYFGAPGAYNWKGNSYMIQRKDWDLSEYSYRGSEEQGNLYIGYTVQVGNAILHPTDIITVVTGAPRHQHMGAVFLLKQESGGDLQRKQVLKGTQVGAYFGSAIALADLNNDGWQDLLVGAPYYFERKEEVGGAVYVFMNQAGASFPDQPSLLLHGPSRSAFGISIASIGDINQDGFQDIAVGAPFEGLGKVYIYHSSSGGLLRQPQQIIHGEKLGLPGLATFGYSLSGKMDVDENLYPDLLVGSLSDHIVLLRARPVINILHRTLVARPAVLDPALCTATSCVQVELCFAYNQSAGNPNYRRNITLAYTLEADRDRRPPRLRFARSQSSVFHGFFSMPETHCQTLELLLMDNVRDKLRPIVIAMNYSLPLRMPDRLKLGLRSLDAYPVLNQAQAMENHTEVHFQKECGPDNKCDSNLQMRAAFLSEQLQPLSRLQYSRDTKKLFLSINVTNSPSSQRAGEDAHEALLTLEVPSALLLSSVRPSGTCQANNETILCELGNPFKRNQRMELLIAFEVIGVTLHTRDLPVLLQLSTSSHQDNLQPVLLTLQVDYTLQASLSLMNHRLQSFFGGTVMGEAAMKTAEDVGSPLKYEFQVSPVGDGLAALGTLVLGLEWPYEVTNGKWLLYPTEITIHSNGSWPCQPSGNLVNPLNLTLSDPGVTPLSPQRRRRQLDPGGDQSSPPVTLAAAKKAKSETVLTCSNGRARCVWLECPLPDTSNITNVTVKARVWNSTFIEDYKDFDRVRVDGWATLFLRTSIPTINMENKTTWFSVDIDSELVEELPAEIELWLVLVAVGAGLLLLGLIILLLWKCGFFKRARTRALYEAKRQKAEMKSQPSETERLTDDY.

Residues 1–32 (MGPGPCRVPRAPGWLLRALALMVAACGRVAFA) form the signal peptide. Topologically, residues 33-993 (FNLDTRFLVV…LVEELPAEIE (961 aa)) are extracellular. 7 FG-GAP repeats span residues 38-103 (RFLV…KDDC), 110-171 (EKSD…DLQL), 185-235 (CNSN…WDLS), 236-293 (EYSY…GGDL), 294-355 (QRKQ…ASFP), 357-412 (QPSL…GLLR), and 416-478 (QIIH…VARP). An N-linked (GlcNAc...) asparagine glycan is attached at Asn86. 3 cysteine pairs are disulfide-bonded: Cys94/Cys103, Cys140/Cys162, and Cys185/Cys197. Disulfide bonds link Cys486–Cys491 and Cys497–Cys551. N-linked (GlcNAc...) asparagine glycosylation is found at Asn501, Asn512, Asn574, and Asn606. A disulfide bridge connects residues Cys616 and Cys622. Residues Asn657, Asn699, Asn843, and Asn859 are each glycosylated (N-linked (GlcNAc...) asparagine). A disulfide bridge links Cys695 with Cys704. 2 cysteine pairs are disulfide-bonded: Cys848-Cys906 and Cys913-Cys918. The segment at 865 to 890 (PGVTPLSPQRRRRQLDPGGDQSSPPV) is disordered. Residues Asn925, Asn928, Asn937, and Asn971 are each glycosylated (N-linked (GlcNAc...) asparagine). Residues 994–1021 (LWLVLVAVGAGLLLLGLIILLLWKCGFF) form a helical membrane-spanning segment. Cys1018 is lipidated: S-palmitoyl cysteine. The Cytoplasmic segment spans residues 1022-1053 (KRARTRALYEAKRQKAEMKSQPSETERLTDDY).

It belongs to the integrin alpha chain family. In terms of assembly, heterodimer of an alpha and a beta subunit. The alpha subunit is composed of a heavy and a light chain linked by a disulfide bond. Alpha-3 associates with beta-1. Interacts with HPS5. Interacts with FAP (seprase); the interaction occurs at the cell surface of invadopodia membrane in a collagen-dependent manner. As to expression, isoform 1 and isoform 2 are expressed in heart and brain. Only isoform 1 is detected in lung.

The protein localises to the cell membrane. It localises to the cell projection. The protein resides in the invadopodium membrane. Its subcellular location is the filopodium membrane. In terms of biological role, integrin alpha-3/beta-1 is a receptor for fibronectin, laminin, collagen, epiligrin, thrombospondin and CSPG4. Integrin alpha-3/beta-1 provides a docking site for FAP (seprase) at invadopodia plasma membranes in a collagen-dependent manner and hence may participate in the adhesion, formation of invadopodia and matrix degradation processes, promoting cell invasion. Alpha-3/beta-1 may mediate with LGALS3 the stimulation by CSPG4 of endothelial cells migration. The polypeptide is Integrin alpha-3 (Itga3) (Mus musculus (Mouse)).